The chain runs to 458 residues: Periphilin-1 (458 aa).

Basic and acidic residues-rich tracts occupy residues 1 to 18 and 63 to 107; these read MWSE…ERAP and EGRS…DGFR. Disordered regions lie at residues 1 to 51 and 63 to 284; these read MWSE…SYNR and EGRS…LFED. Residues 103–109 carry the Nuclear localization signal motif; that stretch reads RDGFRRK. Residue Lys109 forms a Glycyl lysine isopeptide (Lys-Gly) (interchain with G-Cter in SUMO2) linkage. 4 positions are modified to phosphoserine: Ser110, Ser114, Ser133, and Ser140. A compositionally biased stretch (basic and acidic residues) spans 116–142; it reads YARERSPYKRDNTFFRESPVGRKDSPH. Residues 143 to 154 are compositionally biased toward low complexity; the sequence is SRSGSSVSSRSY. A Glycyl lysine isopeptide (Lys-Gly) (interchain with G-Cter in SUMO2) cross-link involves residue Lys160. Residues Ser161 and Ser167 each carry the phosphoserine modification. Residue Lys180 forms a Glycyl lysine isopeptide (Lys-Gly) (interchain with G-Cter in SUMO2) linkage. Basic and acidic residues predominate over residues 181 to 194; that stretch reads RQNEGNPERDKERP. Ser197 carries the post-translational modification Phosphoserine. Lys199 is covalently cross-linked (Glycyl lysine isopeptide (Lys-Gly) (interchain with G-Cter in SUMO2)). Phosphoserine occurs at positions 201 and 205. The segment covering 205-215 has biased composition (low complexity); sequence SPSSGSAVSSS. Residues 217 to 230 show a composition bias toward basic and acidic residues; it reads VLDKPSRLTEKELA. A Glycyl lysine isopeptide (Lys-Gly) (interchain with G-Cter in SUMO2) cross-link involves residue Lys227. 2 positions are modified to N6-acetyllysine; alternate: Lys235 and Lys240. Glycyl lysine isopeptide (Lys-Gly) (interchain with G-Cter in SUMO2); alternate cross-links involve residues Lys235 and Lys240. A compositionally biased stretch (basic and acidic residues) spans 237–246; the sequence is AAEKLEKSDE. Ser325 bears the Phosphoserine mark. Lys328 participates in a covalent cross-link: Glycyl lysine isopeptide (Lys-Gly) (interchain with G-Cter in SUMO2). The segment at 345–406 is disordered; it reads GQTWQQVPPV…TQLRRTTGAP (62 aa). A compositionally biased stretch (pro residues) spans 377 to 386; sequence PQPPQAPQPL. The segment covering 388–398 has biased composition (basic residues); that stretch reads PRKKRVRRTTQ. Lys453 participates in a covalent cross-link: Glycyl lysine isopeptide (Lys-Gly) (interchain with G-Cter in SUMO2).

Homodimer. Component of the HUSH complex; at least composed of TASOR, PPHLN1 and MPHOSPH8. Interacts with SIN3A and HDAC1. May interact with PPL. Post-translationally, substrate of transglutaminase (in vitro). As to expression, ubiquitous.

It is found in the nucleus. The protein localises to the cytoplasm. The protein resides in the chromosome. Functionally, component of the HUSH complex, a multiprotein complex that mediates epigenetic repression. The HUSH complex is recruited to genomic loci rich in H3K9me3 and is probably required to maintain transcriptional silencing by promoting recruitment of SETDB1, a histone methyltransferase that mediates further deposition of H3K9me3. In the HUSH complex, contributes to the maintenance of the complex at chromatin. Acts as a transcriptional corepressor and regulates the cell cycle, probably via the HUSH complex. The HUSH complex is also involved in the silencing of unintegrated retroviral DNA: some part of the retroviral DNA formed immediately after infection remains unintegrated in the host genome and is transcriptionally repressed. May be involved in epithelial differentiation by contributing to epidermal integrity and barrier formation. The polypeptide is Periphilin-1 (Homo sapiens (Human)).